Consider the following 110-residue polypeptide: Body wall hemoglobin (110 aa).

Residues 2 to 110 (VNWAAVVDAF…GAVDAIISHF (109 aa)) enclose the Globin domain. A heme-binding site is contributed by H70.

Belongs to the globin family. In terms of assembly, homotetramer.

The polypeptide is Body wall hemoglobin (Cerebratulus lacteus (Milky ribbon worm)).